Here is a 375-residue protein sequence, read N- to C-terminus: MAKRDYYEVLGVNRNATEAEVKKAFRRLAMKYHPDRNPGDKDAEVKFKEAREAYEVLCDSRKRASYDQFGHAGVEQTFGGAGAGGFGFGDLGDIFDDIFGDIFGGARGGQAREQRGADLAYELVLSLEEAVHGLSRTIKVPTWINCKTCNGSGAKKGSSPATCPRCNGSGQMRMQHGFLQVQQTCSVCRGRGQVIKDPCTDCHGQGRQQQTKTLSVKIPPGIDTGDRIRLAGEGEAGLFGAPPGDLYVQVRVKPHPLFHREGNDLHSEVPIDFTTAALGGEMEIPTLDGSVRLTIPPETQGGKQFRLRGKGVKALRSGAVGDLICHIVVETPVKLSPEQKDYLKQFAELLKKDEKNHSPRTRNWFDSVKDFFTSK.

One can recognise a J domain in the interval Asp-5–Gly-70. The CR-type zinc finger occupies Gly-133 to Thr-211. Zn(2+)-binding residues include Cys-146, Cys-149, Cys-163, Cys-166, Cys-185, Cys-188, Cys-199, and Cys-202. 4 CXXCXGXG motif repeats span residues Cys-146–Gly-153, Cys-163–Gly-170, Cys-185–Gly-192, and Cys-199–Gly-206.

The protein belongs to the DnaJ family. As to quaternary structure, homodimer. Zn(2+) is required as a cofactor.

The protein localises to the cytoplasm. Participates actively in the response to hyperosmotic and heat shock by preventing the aggregation of stress-denatured proteins and by disaggregating proteins, also in an autonomous, DnaK-independent fashion. Unfolded proteins bind initially to DnaJ; upon interaction with the DnaJ-bound protein, DnaK hydrolyzes its bound ATP, resulting in the formation of a stable complex. GrpE releases ADP from DnaK; ATP binding to DnaK triggers the release of the substrate protein, thus completing the reaction cycle. Several rounds of ATP-dependent interactions between DnaJ, DnaK and GrpE are required for fully efficient folding. Also involved, together with DnaK and GrpE, in the DNA replication of plasmids through activation of initiation proteins. The chain is Chaperone protein DnaJ from Coxiella burnetii (strain CbuK_Q154) (Coxiella burnetii (strain Q154)).